The primary structure comprises 488 residues: Glutamyl-tRNA(Gln) amidotransferase subunit A (488 aa).

Residues K77 and S152 each act as charge relay system in the active site. The Acyl-ester intermediate role is filled by S176.

Belongs to the amidase family. GatA subfamily. Heterotrimer of A, B and C subunits.

It carries out the reaction L-glutamyl-tRNA(Gln) + L-glutamine + ATP + H2O = L-glutaminyl-tRNA(Gln) + L-glutamate + ADP + phosphate + H(+). Its function is as follows. Allows the formation of correctly charged Gln-tRNA(Gln) through the transamidation of misacylated Glu-tRNA(Gln) in organisms which lack glutaminyl-tRNA synthetase. The reaction takes place in the presence of glutamine and ATP through an activated gamma-phospho-Glu-tRNA(Gln). The chain is Glutamyl-tRNA(Gln) amidotransferase subunit A from Streptococcus sanguinis (strain SK36).